A 174-amino-acid polypeptide reads, in one-letter code: MGREGWSRVLSATGENRERSLQKFMTETLTQLGQMVGLPASPEVAVLETFDNPHPDRQYLVRFVAPEFTSLCPLTGQPDFAHLVLDYVPDQRLVESKSLKLFLGSFRNHGAFHENCTLTIAKRLEEAMNPTWLRLGGYWYPRGGLPIDVFYQSGEPPAGVWVPEQGVAPYRGRG.

The Thioimide intermediate role is filled by C72. The Proton donor role is filled by D79. Residues 94–96 and 113–114 contribute to the substrate site; these read VES and HE.

This sequence belongs to the GTP cyclohydrolase I family. QueF type 1 subfamily.

The protein localises to the cytoplasm. It carries out the reaction 7-aminomethyl-7-carbaguanine + 2 NADP(+) = 7-cyano-7-deazaguanine + 2 NADPH + 3 H(+). It participates in tRNA modification; tRNA-queuosine biosynthesis. Catalyzes the NADPH-dependent reduction of 7-cyano-7-deazaguanine (preQ0) to 7-aminomethyl-7-deazaguanine (preQ1). In Synechococcus elongatus (strain ATCC 33912 / PCC 7942 / FACHB-805) (Anacystis nidulans R2), this protein is NADPH-dependent 7-cyano-7-deazaguanine reductase.